Here is a 198-residue protein sequence, read N- to C-terminus: tRNA(Phe) 7-((3-amino-3-carboxypropyl)-4-demethylwyosine(37)-N(4))-methyltransferase 1 (198 aa).

It belongs to the TYW3 family.

It carries out the reaction 4-demethyl-7-[(3S)-3-amino-3-carboxypropyl]wyosine(37) in tRNA(Phe) + S-adenosyl-L-methionine = 7-[(3S)-3-amino-3-carboxypropyl]wyosine(37) in tRNA(Phe) + S-adenosyl-L-homocysteine + H(+). S-adenosyl-L-methionine-dependent methyltransferase that acts as a component of the wyosine derivatives biosynthesis pathway. Probably methylates N-4 position of wybutosine-86 to produce wybutosine-72. The chain is tRNA(Phe) 7-((3-amino-3-carboxypropyl)-4-demethylwyosine(37)-N(4))-methyltransferase 1 from Thermococcus kodakarensis (strain ATCC BAA-918 / JCM 12380 / KOD1) (Pyrococcus kodakaraensis (strain KOD1)).